A 42-amino-acid chain; its full sequence is Potassium channel toxin gamma-KTx 1.5 (42 aa).

Cystine bridges form between C5/C23, C11/C34, C20/C39, and C24/C41.

This sequence belongs to the ergtoxin family. Gamma-KTx 1 subfamily. Expressed by the venom gland.

It localises to the secreted. Functionally, blocks Kv11/ERG potassium channels. The polypeptide is Potassium channel toxin gamma-KTx 1.5 (Centruroides limpidus (Mexican scorpion)).